Here is a 345-residue protein sequence, read N- to C-terminus: Uroporphyrinogen decarboxylase (345 aa).

Residues 27–31 (RQAGR), phenylalanine 46, aspartate 76, tyrosine 152, serine 207, and histidine 321 each bind substrate.

This sequence belongs to the uroporphyrinogen decarboxylase family. In terms of assembly, homodimer.

Its subcellular location is the cytoplasm. It carries out the reaction uroporphyrinogen III + 4 H(+) = coproporphyrinogen III + 4 CO2. It participates in porphyrin-containing compound metabolism; protoporphyrin-IX biosynthesis; coproporphyrinogen-III from 5-aminolevulinate: step 4/4. In terms of biological role, catalyzes the decarboxylation of four acetate groups of uroporphyrinogen-III to yield coproporphyrinogen-III. This is Uroporphyrinogen decarboxylase from Staphylococcus aureus (strain Mu3 / ATCC 700698).